The sequence spans 293 residues: 4-hydroxy-tetrahydrodipicolinate synthase (293 aa).

Threonine 47 contributes to the pyruvate binding site. Tyrosine 135 acts as the Proton donor/acceptor in catalysis. The active-site Schiff-base intermediate with substrate is lysine 164. Isoleucine 206 is a binding site for pyruvate.

The protein belongs to the DapA family. As to quaternary structure, homotetramer; dimer of dimers.

It is found in the cytoplasm. It carries out the reaction L-aspartate 4-semialdehyde + pyruvate = (2S,4S)-4-hydroxy-2,3,4,5-tetrahydrodipicolinate + H2O + H(+). It functions in the pathway amino-acid biosynthesis; L-lysine biosynthesis via DAP pathway; (S)-tetrahydrodipicolinate from L-aspartate: step 3/4. Catalyzes the condensation of (S)-aspartate-beta-semialdehyde [(S)-ASA] and pyruvate to 4-hydroxy-tetrahydrodipicolinate (HTPA). The protein is 4-hydroxy-tetrahydrodipicolinate synthase of Flavobacterium psychrophilum (strain ATCC 49511 / DSM 21280 / CIP 103535 / JIP02/86).